The following is a 272-amino-acid chain: uncharacterized protein (272 aa).

Basic and acidic residues-rich tracts occupy residues 136-156 (VRRE…HIDI) and 231-240 (GCKESRRNEP). Disordered stretches follow at residues 136–157 (VRRE…IDIH) and 174–272 (VKPK…WAAF). Residues 243–252 (DLSQLKKNLP) are compositionally biased toward polar residues. The segment covering 253 to 272 (STAGSGSSKSTGAASGWAAF) has biased composition (low complexity).

This is an uncharacterized protein from Arabidopsis thaliana (Mouse-ear cress).